Reading from the N-terminus, the 630-residue chain is tRNA uridine 5-carboxymethylaminomethyl modification enzyme MnmG (630 aa).

Residue 13 to 18 (GGGHAG) coordinates FAD. Residue 273-287 (GPRYCPSIEDKVNRF) coordinates NAD(+).

Belongs to the MnmG family. In terms of assembly, homodimer. Heterotetramer of two MnmE and two MnmG subunits. The cofactor is FAD.

The protein resides in the cytoplasm. Functionally, NAD-binding protein involved in the addition of a carboxymethylaminomethyl (cmnm) group at the wobble position (U34) of certain tRNAs, forming tRNA-cmnm(5)s(2)U34. The protein is tRNA uridine 5-carboxymethylaminomethyl modification enzyme MnmG of Teredinibacter turnerae (strain ATCC 39867 / T7901).